The primary structure comprises 972 residues: Translation initiation factor IF-2 (972 aa).

The span at 48-63 shows a compositional bias: basic and acidic residues; sequence DHLRKSHGATDGDKRK. Disordered stretches follow at residues 48-85 and 99-385; these read DHLR…KART and RDDV…QAPT. Low complexity predominate over residues 105 to 114; that stretch reads GAEQGQAQVA. The span at 121–181 shows a compositional bias: basic and acidic residues; that stretch reads ELKRREEEAR…EEEAAAKRVA (61 aa). Low complexity predominate over residues 182 to 205; the sequence is AEAAAAQQQAAAQQAAAAEQQEAA. Residues 212–263 are compositionally biased toward basic and acidic residues; it reads DEARAAAERAAQREAAKKAEDAAREAADKARAEQEEISKRRAAAEAEARAIR. Residues 279–288 are compositionally biased toward pro residues; it reads PPKPVEPPKP. Low complexity predominate over residues 313–328; sequence PAGAAAPATTAPAGAG. Over residues 357–370 the composition is skewed to gly residues; that stretch reads SSGGVDRGWRGGPK. A tr-type G domain is found at 472 to 641; that stretch reads PRPPVVTVMG…LLQAEVLELK (170 aa). Residues 481-488 form a G1 region; sequence GHVDHGKT. 481–488 is a GTP binding site; it reads GHVDHGKT. Residues 506 to 510 form a G2 region; that stretch reads GITQH. The G3 stretch occupies residues 527-530; that stretch reads DTPG. Residues 527–531 and 581–584 contribute to the GTP site; these read DTPGH and NKID. The tract at residues 581-584 is G4; that stretch reads NKID. The G5 stretch occupies residues 617-619; that stretch reads SAK.

Belongs to the TRAFAC class translation factor GTPase superfamily. Classic translation factor GTPase family. IF-2 subfamily.

Its subcellular location is the cytoplasm. Functionally, one of the essential components for the initiation of protein synthesis. Protects formylmethionyl-tRNA from spontaneous hydrolysis and promotes its binding to the 30S ribosomal subunits. Also involved in the hydrolysis of GTP during the formation of the 70S ribosomal complex. This chain is Translation initiation factor IF-2, found in Burkholderia lata (strain ATCC 17760 / DSM 23089 / LMG 22485 / NCIMB 9086 / R18194 / 383).